The following is a 59-amino-acid chain: Mu-conotoxin SrVA (59 aa).

Residues 1–22 (MRCLPVFVILLLLIASAPSVDA) form the signal peptide. Residues 23–44 (QLKTKDDVPLASFHDNAKGTQH) constitute a propeptide that is removed on maturation. Disulfide bonds link C51–C58 and C52–C59.

Belongs to the conotoxin T superfamily. In terms of tissue distribution, expressed by the venom duct.

It is found in the secreted. Functionally, mu-conotoxins block voltage-gated sodium channels. This peptide inhibits the cardiac sodium channel hNav1.5/SCN5A (33% inhibition at 200 nM, 50% at 400 nM, and 55% at 600 nM). Does not interfere with the voltage-dependence of activation, but affects the voltage-dependence of inactivation of hNav1.5. In vivo, intracranial injection into 9-day-old mice causes transient symptoms, including extension of the body and clockwise and counter-clockwise turns, that last 3 to 4 minutes. Intracranial injection into 16-day-old mice, causes transient symptoms, including agitated breathing and occasional turning followed by scratching and grooming behavior, that last for 15-19 minutes. In Conus spurius (Alphabet cone), this protein is Mu-conotoxin SrVA.